The primary structure comprises 148 residues: uncharacterized protein (148 aa).

The protein localises to the plastid. It is found in the chloroplast. This is an uncharacterized protein from Porphyra purpurea (Red seaweed).